The chain runs to 53 residues: UPF0391 membrane protein BP1737 (53 aa).

Helical transmembrane passes span 5–25 (AVVF…GIAA) and 30–50 (IAKI…LGGV).

It belongs to the UPF0391 family.

It is found in the cell membrane. This chain is UPF0391 membrane protein BP1737, found in Bordetella pertussis (strain Tohama I / ATCC BAA-589 / NCTC 13251).